A 138-amino-acid chain; its full sequence is MRTLWIMAVLLLGVKGNLLQFELMIKKMSGRSGIRWYSDYGCYCGKGGHGQPQDATDRCCFVHDCCYGKVSGCDPKMAFYKYSSDNNDIVCGGNNPCLKEICECDRAAAICFRDNLSTYDNKYWNVPSETCQVESEPC.

Residues 1-16 (MRTLWIMAVLLLGVKG) form the signal peptide. 7 disulfide bridges follow: cysteine 42/cysteine 131, cysteine 44/cysteine 60, cysteine 59/cysteine 111, cysteine 65/cysteine 138, cysteine 66/cysteine 104, cysteine 73/cysteine 97, and cysteine 91/cysteine 102. Positions 43, 45, and 47 each coordinate Ca(2+). The active site involves histidine 63. Aspartate 64 serves as a coordination point for Ca(2+). Residue aspartate 105 is part of the active site.

As to quaternary structure, monomer. The cofactor is Ca(2+). Expressed by the venom gland.

The protein resides in the secreted. It catalyses the reaction a 1,2-diacyl-sn-glycero-3-phosphocholine + H2O = a 1-acyl-sn-glycero-3-phosphocholine + a fatty acid + H(+). Functionally, snake venom phospholipase A2 (PLA2) that impairs hemostasis. It weakly inhibits ADP-induced platelet aggregation when tested on platelet rich plasma from human and rabbit blood (15-25% of inhibition at 5-10 ug of enzyme), and dose-dependently inhibits blood coagulation, possibly by inhibiting thrombin activation. Exhibits high hydrolytic activities toward L-dipalmitoyl phosphatidylcholine. PLA2 catalyzes the calcium-dependent hydrolysis of the 2-acyl groups in 3-sn-phosphoglycerides. The polypeptide is Acidic phospholipase A2 Tpu-E6a (Craspedocephalus puniceus (Flat-nosed pitviper)).